The chain runs to 648 residues: Penicillin-binding protein PbpB (648 aa).

Residues 1 to 35 (MSRRGDRPRTPAQPRKKARVDQPRSARTRRTRVSE) are disordered. The chain crosses the membrane as a helical span at residues 52–72 (GNLAILAVLVIAAVQLFMLQV). S355 functions as the Acyl-ester intermediate in the catalytic mechanism.

The protein belongs to the transpeptidase family. Interacts with Wag31.

The protein localises to the cell membrane. This Mycolicibacterium smegmatis (strain ATCC 700084 / mc(2)155) (Mycobacterium smegmatis) protein is Penicillin-binding protein PbpB (pbpB).